Reading from the N-terminus, the 403-residue chain is Na(+)/H(+) antiporter NhaA (403 aa).

12 consecutive transmembrane segments (helical) span residues 25-45, 70-90, 105-125, 136-156, 165-185, 188-208, 213-233, 234-254, 269-289, 302-322, 340-360, and 369-389; these read IAGL…NSPF, LILW…GLEI, IALP…IFLA, GWAV…AMLG, VFLT…IALA, EGLS…LIVL, VASL…VLES, GVHS…RVSG, VALL…LGGV, IILG…GLAV, GAAL…GLAF, and VNLA…VVLA.

It belongs to the NhaA Na(+)/H(+) (TC 2.A.33) antiporter family.

The protein resides in the cell inner membrane. The enzyme catalyses Na(+)(in) + 2 H(+)(out) = Na(+)(out) + 2 H(+)(in). In terms of biological role, na(+)/H(+) antiporter that extrudes sodium in exchange for external protons. The polypeptide is Na(+)/H(+) antiporter NhaA (Maricaulis maris (strain MCS10) (Caulobacter maris)).